The following is a 186-amino-acid chain: Tumor necrosis factor alpha-induced protein 8-like protein 1 (186 aa).

It belongs to the TNFAIP8 family. Interacts with FBXW5; TNFAIP8L1 competes with TSC2 to bind FBXW5 increasing TSC2 stability by preventing its ubiquitination. In terms of tissue distribution, detected in wide variety tissues, such as neurons in brain, hepatocytes, germ cells of female and male reproductive organs, muscular tissues and variety types of cells of the epithelial origin (at protein level).

Its subcellular location is the cytoplasm. In terms of biological role, acts as a negative regulator of mTOR activity. The chain is Tumor necrosis factor alpha-induced protein 8-like protein 1 (Tnfaip8l1) from Mus musculus (Mouse).